A 113-amino-acid polypeptide reads, in one-letter code: Nucleoid-associated protein Csac_1593 (113 aa).

The protein belongs to the YbaB/EbfC family. Homodimer.

The protein localises to the cytoplasm. It is found in the nucleoid. Functionally, binds to DNA and alters its conformation. May be involved in regulation of gene expression, nucleoid organization and DNA protection. The protein is Nucleoid-associated protein Csac_1593 of Caldicellulosiruptor saccharolyticus (strain ATCC 43494 / DSM 8903 / Tp8T 6331).